A 142-amino-acid chain; its full sequence is Large ribosomal subunit protein uL11 (142 aa).

Belongs to the universal ribosomal protein uL11 family. Part of the ribosomal stalk of the 50S ribosomal subunit. Interacts with L10 and the large rRNA to form the base of the stalk. L10 forms an elongated spine to which L12 dimers bind in a sequential fashion forming a multimeric L10(L12)X complex. Post-translationally, one or more lysine residues are methylated.

Forms part of the ribosomal stalk which helps the ribosome interact with GTP-bound translation factors. The chain is Large ribosomal subunit protein uL11 from Hahella chejuensis (strain KCTC 2396).